Reading from the N-terminus, the 567-residue chain is MEADDDFYSGTENYSDYADSDEDDADGEYEFVDDAADDSDDLIFRRRQQNYSVLSEADICKLQEDDISRISTVLSISRNSSAILLRHYNWCVSRVHDEWFADEEKVRDAVGLLEKPVVDFPTDGELDCGICFETFLSDKLHAAACGHPFCDSCWEGYITTAINDGPGCLTLRCPDPSCRAAVGQDMINLLAPDKDKQKYTSYFVRSYVEDNRKTKWCPAPGCDYAVNFVVGSGNYDVNCRCCYSFCWNCAEEAHRPVDCDTVSKWVLKNSAESENMNWILANSKPCPKCKRPIEKNQGCMHITCTPPCKFEFCWLCLGAWTEHGEKTGGFYACNRYEAAKQDGIYDETEKRREMAKNSLERYTHYYERWATNQSSRQKALLDLKKMQTDDIEKLSDIQCQPESQLKFIIEAWLQIVECRRVLKWTYAYGFYIPDQEHGKRVFFEYLQGEAESGLERLHQCAEKELLPYLDAKGPSEDFNEFRTKLAGLTSVTKNYFENLVRALENGLSDVNSHDAYDRTSSSKSLGGKTKGSSSKASSSDSSHWPCEYCTYVNPRSTTICQMCEHGR.

The interval 1–27 is disordered; that stretch reads MEADDDFYSGTENYSDYADSDEDDADG. The segment covering 18 to 27 has biased composition (acidic residues); sequence ADSDEDDADG. The segment at 124-337 is TRIAD supradomain; the sequence is GELDCGICFE…GGFYACNRYE (214 aa). 18 residues coordinate Zn(2+): Cys-128, Cys-131, Cys-145, His-147, Cys-150, Cys-153, Cys-173, Cys-178, Cys-217, Cys-222, Cys-239, Cys-241, Cys-246, Cys-249, His-254, Cys-259, Cys-286, and Cys-289. The RING-type 1 zinc finger occupies 128 to 178; sequence CGICFETFLSDKLHAAACGHPFCDSCWEGYITTAINDGPGCLTLRCPDPSC. The IBR-type zinc finger occupies 197-259; the sequence is QKYTSYFVRS…AEEAHRPVDC (63 aa). The RING-type 2; atypical zinc finger occupies 286–316; sequence CPKCKRPIEKNQGCMHITCTPPCKFEFCWLC. Cys-299 is a catalytic residue. Residues Cys-304, Cys-308, Cys-313, Cys-316, His-323, and Cys-333 each contribute to the Zn(2+) site. Residues 514–543 are disordered; sequence DAYDRTSSSKSLGGKTKGSSSKASSSDSSH. Positions 521 to 542 are enriched in low complexity; the sequence is SSKSLGGKTKGSSSKASSSDSS. The RanBP2-type zinc-finger motif lies at 540–567; sequence DSSHWPCEYCTYVNPRSTTICQMCEHGR.

The protein belongs to the RBR family. Ariadne subfamily. It depends on Zn(2+) as a cofactor. As to expression, ubiquitous.

It catalyses the reaction [E2 ubiquitin-conjugating enzyme]-S-ubiquitinyl-L-cysteine + [acceptor protein]-L-lysine = [E2 ubiquitin-conjugating enzyme]-L-cysteine + [acceptor protein]-N(6)-ubiquitinyl-L-lysine.. It participates in protein modification; protein ubiquitination. In terms of biological role, might act as an E3 ubiquitin-protein ligase, or as part of E3 complex, which accepts ubiquitin from specific E2 ubiquitin-conjugating enzymes and then transfers it to substrates. The chain is Probable E3 ubiquitin-protein ligase ARI8 (ARI8) from Arabidopsis thaliana (Mouse-ear cress).